Here is an 823-residue protein sequence, read N- to C-terminus: Protein phosphatase 1 regulatory subunit 29 (823 aa).

The first 22 residues, 1–22 (MLRLGLCAAALLCVCQPGAVRA), serve as a signal peptide directing secretion. The Extracellular portion of the chain corresponds to 23–397 (DCWLIEGDKG…APSTSTTTHY (375 aa)). An N-linked (GlcNAc...) asparagine glycan is attached at Asn54. LRR repeat units follow at residues 56 to 77 (TVHD…SLNR), 80 to 101 (NLTD…AFLG), 104 to 125 (SLQV…MLRG), 128 to 149 (RLQF…AFSE), and 152 to 173 (SLIS…TFAS). Residues Asn80, Asn85, and Asn117 are each glycosylated (N-linked (GlcNAc...) asparagine). One can recognise an LRRCT domain in the interval 185 to 247 (NPFNCECDLF…ITVLQAKCRN (63 aa)). 2 N-linked (GlcNAc...) asparagine glycosylation sites follow: Asn205 and Asn247. The segment at 249-294 (SMPARPVSHPTPYSTDAQREPDENSGFNPDEILSVEPPASSTTDAS) is disordered. Residues 292-379 (DASAGPAIKL…FNHTCLTFTT (88 aa)) enclose the Fibronectin type-III domain. Residues 398-418 (IMTILGCLFGMVIVLGAVYYC) traverse the membrane as a helical segment. Residues 419–823 (LRKRRMQEEK…WKGVSAQQKL (405 aa)) lie on the Cytoplasmic side of the membrane. The interval 590-624 (ASSAATPGALERPSFLSPPYKESSHHPLQRQLSAD) is disordered. Ser622, Ser671, and Ser675 each carry phosphoserine.

In terms of assembly, interacts with PPP1CA.

The protein resides in the membrane. In terms of biological role, inhibits phosphatase activity of protein phosphatase 1 (PP1) complexes. The polypeptide is Protein phosphatase 1 regulatory subunit 29 (Elfn2) (Mus musculus (Mouse)).